A 296-amino-acid polypeptide reads, in one-letter code: Cytidine deaminase (296 aa).

2 consecutive CMP/dCMP-type deaminase domains span residues 48–168 (DVDA…FGPV) and 187–296 (QNVN…FIEE). 89-91 (NME) provides a ligand contact to substrate. Position 102 (H102) interacts with Zn(2+). E104 serves as the catalytic Proton donor. Zn(2+)-binding residues include C129 and C132.

This sequence belongs to the cytidine and deoxycytidylate deaminase family. As to quaternary structure, homodimer. Zn(2+) serves as cofactor.

It catalyses the reaction cytidine + H2O + H(+) = uridine + NH4(+). It carries out the reaction 2'-deoxycytidine + H2O + H(+) = 2'-deoxyuridine + NH4(+). Functionally, this enzyme scavenges exogenous and endogenous cytidine and 2'-deoxycytidine for UMP synthesis. The sequence is that of Cytidine deaminase from Pectobacterium atrosepticum (strain SCRI 1043 / ATCC BAA-672) (Erwinia carotovora subsp. atroseptica).